Here is a 404-residue protein sequence, read N- to C-terminus: Phosphoglycerate kinase (404 aa).

Residues 21–23 (DFN), R36, 59–62 (HLGR), R119, and R162 contribute to the substrate site. ATP is bound by residues K213, G300, E331, and 360–363 (GGDS).

It belongs to the phosphoglycerate kinase family. Monomer.

It localises to the cytoplasm. It carries out the reaction (2R)-3-phosphoglycerate + ATP = (2R)-3-phospho-glyceroyl phosphate + ADP. It functions in the pathway carbohydrate degradation; glycolysis; pyruvate from D-glyceraldehyde 3-phosphate: step 2/5. This chain is Phosphoglycerate kinase, found in Oenococcus oeni (strain ATCC BAA-331 / PSU-1).